The following is a 569-amino-acid chain: Methionine--tRNA ligase (569 aa).

The 'HIGH' region signature appears at 11–21 (PYINGVKHLGN). Zn(2+)-binding residues include Cys143, Cys146, Cys156, and Cys159. A 'KMSKS' region motif is present at residues 342 to 346 (KFSTS). Residue Thr345 coordinates ATP.

It belongs to the class-I aminoacyl-tRNA synthetase family. MetG type 1 subfamily. As to quaternary structure, monomer. Requires Zn(2+) as cofactor.

Its subcellular location is the cytoplasm. The enzyme catalyses tRNA(Met) + L-methionine + ATP = L-methionyl-tRNA(Met) + AMP + diphosphate. Functionally, is required not only for elongation of protein synthesis but also for the initiation of all mRNA translation through initiator tRNA(fMet) aminoacylation. This chain is Methionine--tRNA ligase, found in Caulobacter sp. (strain K31).